The chain runs to 210 residues: MKKFTKILSLSTLLFLAGCQSVLNEPTEVQQPGVQIPHNDAQWQQHLQQLAKIQSYSAKGQIGYISPEERFSSHFDWQYRTPTNFGLELSSNLSSKSLKLQRNARGLTISDSEGNSRSDRDMDSLMKEIIGVAFPIDQFAYWLKGQPEQDGNYIVNDKRQLSQFSYHINGEVWKASYVQYHEDRQPNLPKLIVLENGSQTLKIRVDQWAF.

The first 18 residues, 1–18 (MKKFTKILSLSTLLFLAG), serve as a signal peptide directing secretion. Cys-19 carries N-palmitoyl cysteine lipidation. The S-diacylglycerol cysteine moiety is linked to residue Cys-19.

This sequence belongs to the LolB family. Monomer.

The protein resides in the cell outer membrane. Its function is as follows. Plays a critical role in the incorporation of lipoproteins in the outer membrane after they are released by the LolA protein. The sequence is that of Outer-membrane lipoprotein LolB from Actinobacillus pleuropneumoniae serotype 7 (strain AP76).